A 303-amino-acid chain; its full sequence is 2-dehydropantoate 2-reductase (303 aa).

Residues 7–12 (GCGALG), Asn98, and Ala122 contribute to the NADP(+) site. Asn98 contributes to the substrate binding site. Lys176 functions as the Proton donor in the catalytic mechanism. Residues Asn180, Asn184, Asn194, and Ser244 each coordinate substrate. Glu256 contributes to the NADP(+) binding site.

It belongs to the ketopantoate reductase family. As to quaternary structure, monomer.

Its subcellular location is the cytoplasm. It catalyses the reaction (R)-pantoate + NADP(+) = 2-dehydropantoate + NADPH + H(+). The protein operates within cofactor biosynthesis; (R)-pantothenate biosynthesis; (R)-pantoate from 3-methyl-2-oxobutanoate: step 2/2. Catalyzes the NADPH-dependent reduction of ketopantoate into pantoic acid. In Shigella flexneri, this protein is 2-dehydropantoate 2-reductase (panE).